Consider the following 443-residue polypeptide: MPFVPHSPEDVSVMLDAIGVNTIEDLFADIPAEMRPKSFALPKGLSEMDVCSRLEALSARNRTDVVSFLGAGFYDHHIPKAVDALSSRGEFYTAYTPYQPEAAQGTLQAIFEFQTAVCRLLDMDCANASVYDGGSALFEAMMMAVRATRRRKLVIDEALSPIYRTMLASYTSNLQLELVTVPHRDGLSDMDALKASVDDTCAAVVVQNPNFFGAITDFTDLFTHARAHKALGVISVYPVMQSVLKTPGEMGADIAVADGQSIGQPLSFGGPYLGIMTCTKPLVRQIPGRIVGRTQDVDGRTGYVLTLQAREQHIRRAKATSNICSNQALCALRSLIHLTLLGPEGLVRTAELSMERARYAAERLTALPGVELLHDAPFGNEFAVRLPVSAFEVVDRLTARGYVPGFPVGRYYPGMDNVLLVACTEKHSFEQVGILAEMLGGIL.

This sequence belongs to the GcvP family. N-terminal subunit subfamily. As to quaternary structure, the glycine cleavage system is composed of four proteins: P, T, L and H. In this organism, the P 'protein' is a heterodimer of two subunits.

It carries out the reaction N(6)-[(R)-lipoyl]-L-lysyl-[glycine-cleavage complex H protein] + glycine + H(+) = N(6)-[(R)-S(8)-aminomethyldihydrolipoyl]-L-lysyl-[glycine-cleavage complex H protein] + CO2. Its function is as follows. The glycine cleavage system catalyzes the degradation of glycine. The P protein binds the alpha-amino group of glycine through its pyridoxal phosphate cofactor; CO(2) is released and the remaining methylamine moiety is then transferred to the lipoamide cofactor of the H protein. The polypeptide is Probable glycine dehydrogenase (decarboxylating) subunit 1 (Nitratidesulfovibrio vulgaris (strain ATCC 29579 / DSM 644 / CCUG 34227 / NCIMB 8303 / VKM B-1760 / Hildenborough) (Desulfovibrio vulgaris)).